A 258-amino-acid chain; its full sequence is MATTATEAAPAQEQQANGNGEQKTRHSEVGHKSLLKSDDLYQYILDTSVYPREPESMKELREVTAKHPWNLMTTSADEGQFLNMLIKLIGAKKTMEIGVYTGYSLLATALALPEDGTILAMDINRENYELGLPCIEKAGVAHKIDFREGPALPVLDDLIAEEKNHGSFDFVFVDADKDNYLNYHERLLKLVKLGGLIGYDNTLWNGSVVLPDDAPMRKYIRFYRDFVLVLNKALAADDRVEICQLPVGDGVTLCRRVK.

Low complexity predominate over residues 1 to 16 (MATTATEAAPAQEQQA). The tract at residues 1–31 (MATTATEAAPAQEQQANGNGEQKTRHSEVGH) is disordered. The span at 22 to 31 (QKTRHSEVGH) shows a compositional bias: basic and acidic residues. Residue lysine 32 participates in substrate binding. S-adenosyl-L-methionine is bound by residues threonine 74, glutamate 96, 98–99 (GV), serine 104, aspartate 122, and alanine 151. Aspartate 174 serves as a coordination point for substrate. Residue aspartate 174 participates in a divalent metal cation binding. Aspartate 176 provides a ligand contact to S-adenosyl-L-methionine. Positions 200 and 201 each coordinate a divalent metal cation. Asparagine 205 contributes to the substrate binding site.

Belongs to the class I-like SAM-binding methyltransferase superfamily. Cation-dependent O-methyltransferase family. CCoAMT subfamily. It depends on a divalent metal cation as a cofactor.

The catalysed reaction is (E)-caffeoyl-CoA + S-adenosyl-L-methionine = (E)-feruloyl-CoA + S-adenosyl-L-homocysteine + H(+). It participates in aromatic compound metabolism; phenylpropanoid biosynthesis. Its function is as follows. Methylates caffeoyl-CoA to feruloyl-CoA and 5-hydroxyferuloyl-CoA to sinapoyl-CoA. Plays a role in the synthesis of feruloylated polysaccharides. Involved in the reinforcement of the plant cell wall. Also involved in the responding to wounding or pathogen challenge by the increased formation of cell wall-bound ferulic acid polymers. In Zea mays (Maize), this protein is Caffeoyl-CoA O-methyltransferase 1 (CCOAOMT1).